A 297-amino-acid polypeptide reads, in one-letter code: ER membrane protein complex subunit 2-B (297 aa).

TPR repeat units lie at residues 87–120 (HRVKRLTGLRFEAMERYDDALQIYDRILQDDPTN), 155–188 (QEAWHELAELYINELDYAKAAFCLEELILTNPHN), and 192–225 (YQQFAEVKYTQGGLENLELSRKYFSQALKLNNHS).

The protein belongs to the EMC2 family. In terms of assembly, component of the ER membrane protein complex (EMC).

Its subcellular location is the endoplasmic reticulum membrane. Functionally, part of the endoplasmic reticulum membrane protein complex (EMC) that enables the energy-independent insertion into endoplasmic reticulum membranes of newly synthesized membrane proteins. Preferentially accommodates proteins with transmembrane domains that are weakly hydrophobic or contain destabilizing features such as charged and aromatic residues. Involved in the cotranslational insertion of multi-pass membrane proteins in which stop-transfer membrane-anchor sequences become ER membrane spanning helices. It is also required for the post-translational insertion of tail-anchored/TA proteins in endoplasmic reticulum membranes. By mediating the proper cotranslational insertion of N-terminal transmembrane domains in an N-exo topology, with translocated N-terminus in the lumen of the ER, controls the topology of multi-pass membrane proteins. By regulating the insertion of various proteins in membranes, it is indirectly involved in many cellular processes. This is ER membrane protein complex subunit 2-B (emc2-b) from Xenopus laevis (African clawed frog).